Here is a 668-residue protein sequence, read N- to C-terminus: COBRA-like protein 11 (668 aa).

A signal peptide spans 1 to 29 (MKKLRYVHLNLLLLLLPLINLQFPTLSLA). N69, N125, N254, N318, N329, N358, N412, N432, N473, N552, N560, and N579 each carry an N-linked (GlcNAc...) asparagine glycan. The GPI-anchor amidated serine moiety is linked to residue S636. A propeptide spans 637–668 (SGMRLSGIRFLPSILLAITTFHAITDRLLTGV) (removed in mature form).

The protein belongs to the COBRA family. As to expression, mostly expressed in flowers, stamen, anthers and pollen, and, to a lower extent, possibly in roots, stems, leaves and siliques.

Its subcellular location is the cell membrane. Functionally, involved in the deposition of apical pectin cap and cellulose microfibrils in pollen tubes. Implicated in pollen tubes growth in the female transmitting tract of pistil and toward micropyles, via the perception of ovule guidance cues. The polypeptide is COBRA-like protein 11 (Arabidopsis thaliana (Mouse-ear cress)).